Consider the following 465-residue polypeptide: Beta-1,2-xylosyltransferase XYXT1 (465 aa).

Residues 1-11 (MKAAVRSKKSK) lie on the Cytoplasmic side of the membrane. A helical; Signal-anchor for type II membrane protein membrane pass occupies residues 12 to 32 (GSFCHPPLLLLIVAIQFLVIY). Residues 33-465 (SPTLDQYMVM…VLLKALHLLR (433 aa)) lie on the Lumenal side of the membrane. Residues Asn-80, Asn-118, Asn-125, Asn-266, and Asn-403 are each glycosylated (N-linked (GlcNAc...) asparagine).

The protein belongs to the glycosyltransferase 61 family. Widely expressed.

It is found in the golgi apparatus membrane. It participates in glycan metabolism. In terms of biological role, glycosyltransferase involved in the xylosylation of xylan, the major hemicellulose (non-cellulosic component) of primary and secondary walls of angiosperms. Possesses beta-1,2-xylosyltransferase activity, transferring xylose from UDP-xylose to the xylan backbone. Catalyzes the addition of 2-O-xylosyl side chains to the xylan backbone. This Oryza sativa subsp. japonica (Rice) protein is Beta-1,2-xylosyltransferase XYXT1.